We begin with the raw amino-acid sequence, 251 residues long: Protein crossbronx (251 aa).

In terms of domain architecture, UBC core spans 20–176 (QQEYKILAEY…TRENIRESLA (157 aa)). The disordered stretch occupies residues 211–251 (QSKHLESQSQQSNNGGNGGGGGAATGLSWVKEGEFKPLSVE). Positions 225-234 (GGNGGGGGAA) are enriched in gly residues.

Belongs to the ubiquitin-conjugating enzyme family. FTS subfamily.

This chain is Protein crossbronx (cbx), found in Drosophila willistoni (Fruit fly).